We begin with the raw amino-acid sequence, 345 residues long: Fructose-1,6-bisphosphatase class 1 (345 aa).

Positions 90, 109, 111, and 112 each coordinate Mg(2+). Substrate-binding positions include 112–115 (DGSS) and N199. E271 provides a ligand contact to Mg(2+).

Belongs to the FBPase class 1 family. As to quaternary structure, homotetramer. Mg(2+) is required as a cofactor.

It is found in the cytoplasm. It carries out the reaction beta-D-fructose 1,6-bisphosphate + H2O = beta-D-fructose 6-phosphate + phosphate. The protein operates within carbohydrate biosynthesis; Calvin cycle. The chain is Fructose-1,6-bisphosphatase class 1 from Rhodopseudomonas palustris (strain BisB5).